The sequence spans 387 residues: Pepsin A (387 aa).

An N-terminal signal peptide occupies residues 1–16 (MKKLLLLLGLVALSEC). The propeptide at 17–61 (LYKVPLVKKKSLRQNLIENGLLKDFLAKHNVNPASKYFPTEAATE) is activation peptide. Positions 75-384 (YFGTIGIGTP…DRGNNRVGLA (310 aa)) constitute a Peptidase A1 domain. D93 is a catalytic residue. An intrachain disulfide couples C106 to C111. The residue at position 129 (S129) is a Phosphoserine. C267 and C271 are oxidised to a cystine. D276 is a catalytic residue. C310 and C343 are disulfide-bonded.

Belongs to the peptidase A1 family.

The protein resides in the secreted. It catalyses the reaction Preferential cleavage: hydrophobic, preferably aromatic, residues in P1 and P1' positions. Cleaves 1-Phe-|-Val-2, 4-Gln-|-His-5, 13-Glu-|-Ala-14, 14-Ala-|-Leu-15, 15-Leu-|-Tyr-16, 16-Tyr-|-Leu-17, 23-Gly-|-Phe-24, 24-Phe-|-Phe-25 and 25-Phe-|-Tyr-26 bonds in the B chain of insulin.. Its function is as follows. Shows particularly broad specificity; although bonds involving phenylalanine and leucine are preferred, many others are also cleaved to some extent. This is Pepsin A (PGA) from Suncus murinus (Asian house shrew).